We begin with the raw amino-acid sequence, 403 residues long: GPI-N-acetylgalactosamine transferase PGAP4 (403 aa).

Residues 1–22 (MTTSTSPAAMLLRRLRRLSWGS) lie on the Cytoplasmic side of the membrane. A helical membrane pass occupies residues 23–43 (TAVQLFILTVVTFGLLAPLAC). The Lumenal portion of the chain corresponds to 44 to 264 (HRLLHSYFYL…INPEPMRILE (221 aa)). UDP-N-acetyl-alpha-D-galactosamine is bound at residue Val109. 2 cysteine pairs are disulfide-bonded: Cys132–Cys136 and Cys144–Cys194. The DXD motif motif lies at 211 to 213 (EDD). Residues 265 to 285 (WVGVGMLLGPVLTWIYMRFAC) traverse the membrane as a helical segment. Residues 286-287 (RP) are Cytoplasmic-facing. Residues 288-308 (GFSWPVMLFFCLYSMGLVELV) traverse the membrane as a helical segment. At 309–403 (GRHYFLELRR…LRYNFHPSLL (95 aa)) the chain is on the lumenal side. Cys332 and Cys333 are joined by a disulfide. UDP-N-acetyl-alpha-D-galactosamine-binding residues include Thr334, Pro335, and Lys362.

This sequence belongs to the PGAP4 family. Glycosylated.

The protein localises to the golgi apparatus membrane. Its function is as follows. Golgi-resident glycosylphosphatidylinositol (GPI)-N-acetylgalactosamine transferase that catalyzes the N-acetyl-beta-D-galactosamine transfer from an UDP-N-acetyl-alpha-D-galactosamine to the 4-OH-position of first mannose of the glycosylphosphatidylinositol (GPI) of a GPI-anchored protein (GPI-AP). This modification occurs after the fatty acid remodeling step of the GPI-anchor maturation. In Mus musculus (Mouse), this protein is GPI-N-acetylgalactosamine transferase PGAP4.